A 276-amino-acid chain; its full sequence is NH(3)-dependent NAD(+) synthetase (276 aa).

43-50 (GISGGVDS) lines the ATP pocket. A Mg(2+)-binding site is contributed by D49. Deamido-NAD(+) is bound at residue R146. Position 166 (T166) interacts with ATP. E171 contributes to the Mg(2+) binding site. 2 residues coordinate deamido-NAD(+): K179 and D186. Residues K195 and T217 each contribute to the ATP site. Position 266–267 (266–267 (HK)) interacts with deamido-NAD(+).

It belongs to the NAD synthetase family. Homodimer.

The enzyme catalyses deamido-NAD(+) + NH4(+) + ATP = AMP + diphosphate + NAD(+) + H(+). The protein operates within cofactor biosynthesis; NAD(+) biosynthesis; NAD(+) from deamido-NAD(+) (ammonia route): step 1/1. Catalyzes the ATP-dependent amidation of deamido-NAD to form NAD. Uses ammonia as a nitrogen source. This is NH(3)-dependent NAD(+) synthetase from Vibrio atlanticus (strain LGP32) (Vibrio splendidus (strain Mel32)).